Reading from the N-terminus, the 46-residue chain is Large ribosomal subunit protein bL33B (46 aa).

This sequence belongs to the bacterial ribosomal protein bL33 family.

The chain is Large ribosomal subunit protein bL33B (rpmG2) from Mycoplasmopsis pulmonis (strain UAB CTIP) (Mycoplasma pulmonis).